The following is a 276-amino-acid chain: NAD-capped RNA hydrolase NudC (276 aa).

Arg82 contacts substrate. Zn(2+)-binding residues include Cys112 and Cys115. Glu125 lines the substrate pocket. The Zn(2+) site is built by Cys130 and Cys133. Tyr138 provides a ligand contact to substrate. In terms of domain architecture, Nudix hydrolase spans 139–262 (PRISPSMIVL…SIARYLIDLY (124 aa)). Ala172, Glu188, and Glu192 together coordinate a divalent metal cation. Residues 173–194 (GFAEPGESAEDCLVREVREEVA) carry the Nudix box motif. 206-213 (QCWPFPHS) lines the substrate pocket. Position 233 (Glu233) interacts with a divalent metal cation. A substrate-binding site is contributed by Ala255.

The protein belongs to the Nudix hydrolase family. NudC subfamily. In terms of assembly, homodimer. It depends on Mg(2+) as a cofactor. The cofactor is Mn(2+). Zn(2+) is required as a cofactor.

The catalysed reaction is a 5'-end NAD(+)-phospho-ribonucleoside in mRNA + H2O = a 5'-end phospho-adenosine-phospho-ribonucleoside in mRNA + beta-nicotinamide D-ribonucleotide + 2 H(+). It carries out the reaction NAD(+) + H2O = beta-nicotinamide D-ribonucleotide + AMP + 2 H(+). It catalyses the reaction NADH + H2O = reduced beta-nicotinamide D-ribonucleotide + AMP + 2 H(+). Its function is as follows. mRNA decapping enzyme that specifically removes the nicotinamide adenine dinucleotide (NAD) cap from a subset of mRNAs by hydrolyzing the diphosphate linkage to produce nicotinamide mononucleotide (NMN) and 5' monophosphate mRNA. The NAD-cap is present at the 5'-end of some mRNAs and stabilizes RNA against 5'-processing. Has preference for mRNAs with a 5'-end purine. Catalyzes the hydrolysis of a broad range of dinucleotide pyrophosphates. This is NAD-capped RNA hydrolase NudC from Pseudomonas putida (strain GB-1).